The following is a 155-amino-acid chain: Small ribosomal subunit protein uS7 (155 aa).

This sequence belongs to the universal ribosomal protein uS7 family. As to quaternary structure, part of the 30S ribosomal subunit. Contacts proteins S9 and S11.

Functionally, one of the primary rRNA binding proteins, it binds directly to 16S rRNA where it nucleates assembly of the head domain of the 30S subunit. Is located at the subunit interface close to the decoding center, probably blocks exit of the E-site tRNA. The protein is Small ribosomal subunit protein uS7 of Nautilia profundicola (strain ATCC BAA-1463 / DSM 18972 / AmH).